A 311-amino-acid polypeptide reads, in one-letter code: Sensor histidine kinase YcbM (311 aa).

A helical membrane pass occupies residues 1–21; sequence MTVLWVAAVIALACLNVIQFI. At 22-311 the chain is on the cytoplasmic side; it reads MKKKRDGNLA…FTITLKRMTY (290 aa). The 219-residue stretch at 92 to 310 folds into the Histidine kinase domain; sequence NMSHDLKTPL…AFTITLKRMT (219 aa). H95 bears the Phosphohistidine; by autocatalysis mark.

It is found in the cell membrane. It carries out the reaction ATP + protein L-histidine = ADP + protein N-phospho-L-histidine.. Its function is as follows. Member of the two-component regulatory system YcbM/YcbL. Probably activates YcbL by phosphorylation. The polypeptide is Sensor histidine kinase YcbM (ycbM) (Bacillus subtilis (strain 168)).